The sequence spans 421 residues: ATP-dependent RNA helicase RhlB (421 aa).

A Q motif motif is present at residues 9-37 (QKFSDFALHPKVVEALEKKGFHNCTPIQA). A Helicase ATP-binding domain is found at 40 to 219 (LPLTLAGRDV…FEQMNNAEYI (180 aa)). 53–60 (AQTGTGKT) is an ATP binding site. Residues 165–168 (DEAD) carry the DEAD box motif. Positions 245–390 (RLLQTLIEEE…VSKYNPDALM (146 aa)) constitute a Helicase C-terminal domain. The segment at 392–421 (DLPKPLRLTRPRTGNGPRRTGTPRNRRRSG) is disordered. The span at 402–414 (PRTGNGPRRTGTP) shows a compositional bias: low complexity.

This sequence belongs to the DEAD box helicase family. RhlB subfamily. Component of the RNA degradosome, which is a multiprotein complex involved in RNA processing and mRNA degradation.

It localises to the cytoplasm. It catalyses the reaction ATP + H2O = ADP + phosphate + H(+). In terms of biological role, DEAD-box RNA helicase involved in RNA degradation. Has RNA-dependent ATPase activity and unwinds double-stranded RNA. In Escherichia coli O7:K1 (strain IAI39 / ExPEC), this protein is ATP-dependent RNA helicase RhlB.